The following is a 326-amino-acid chain: dTDP-4-dehydro-6-deoxy-D-allose reductase (326 aa).

NAD(+)-binding positions include 15 to 21 and 129 to 132; these read GALGFIG and MSSS. Catalysis depends on Tyr160, which acts as the Proton donor/acceptor. Residues Lys164 and 187–190 contribute to the NAD(+) site; that span reads PGNV.

It belongs to the NAD(P)-dependent epimerase/dehydratase family.

It carries out the reaction dTDP-6-deoxy-alpha-D-allose + NAD(+) = dTDP-4-dehydro-6-deoxy-alpha-D-allose + NADH + H(+). The enzyme catalyses dTDP-6-deoxy-alpha-D-allose + NADP(+) = dTDP-4-dehydro-6-deoxy-alpha-D-allose + NADPH + H(+). In terms of biological role, catalyzes the stereospecific reduction of the C-4 keto group of dTDP-4-dehydro-6-deoxy-D-allose, leading to dTDP-6-deoxy-D-allose, an intermediate in the biosynthesis of the mycinose moiety of dihydrochalcomycin (GERI-155) antibiotic. Cannot directly reduce dTDP-4-dehydro-6-deoxyglucose, and thus acts after the epimerization step catalyzed by GerF. In Streptomyces sp, this protein is dTDP-4-dehydro-6-deoxy-D-allose reductase (gerKI).